The primary structure comprises 309 residues: Methionyl-tRNA formyltransferase (309 aa).

107–110 (SLLP) contacts (6S)-5,6,7,8-tetrahydrofolate.

It belongs to the Fmt family.

The enzyme catalyses L-methionyl-tRNA(fMet) + (6R)-10-formyltetrahydrofolate = N-formyl-L-methionyl-tRNA(fMet) + (6S)-5,6,7,8-tetrahydrofolate + H(+). Attaches a formyl group to the free amino group of methionyl-tRNA(fMet). The formyl group appears to play a dual role in the initiator identity of N-formylmethionyl-tRNA by promoting its recognition by IF2 and preventing the misappropriation of this tRNA by the elongation apparatus. The chain is Methionyl-tRNA formyltransferase from Borrelia turicatae (strain 91E135).